Here is a 217-residue protein sequence, read N- to C-terminus: Large ribosomal subunit protein bL25 (217 aa).

The tract at residues 187–217 (STPSGLEVEEETGEEESAEPEVIEKGKKEEE) is disordered. Positions 193–207 (EVEEETGEEESAEPE) are enriched in acidic residues. A compositionally biased stretch (basic and acidic residues) spans 208–217 (VIEKGKKEEE).

It belongs to the bacterial ribosomal protein bL25 family. CTC subfamily. In terms of assembly, part of the 50S ribosomal subunit; part of the 5S rRNA/L5/L18/L25 subcomplex. Contacts the 5S rRNA. Binds to the 5S rRNA independently of L5 and L18.

In terms of biological role, this is one of the proteins that binds to the 5S RNA in the ribosome where it forms part of the central protuberance. This is Large ribosomal subunit protein bL25 from Thermosipho africanus (strain TCF52B).